We begin with the raw amino-acid sequence, 442 residues long: U11/U12 small nuclear ribonucleoprotein 65 kDa protein (442 aa).

Positions valine 28–lysine 102 constitute an RRM 1 domain. Disordered stretches follow at residues asparagine 101–serine 138, leucine 200–arginine 242, and serine 290–leucine 317. Residues lysine 102–valine 116 show a composition bias toward basic and acidic residues. The span at threonine 117 to isoleucine 136 shows a compositional bias: polar residues. Positions leucine 200 to lysine 209 are enriched in pro residues. Positions tyrosine 297 to alanine 307 are enriched in acidic residues. One can recognise an RRM 2 domain in the interval valine 352–threonine 434.

As to quaternary structure, component of the U11/U12 snRNPs that are part of the U12-type spliceosome. Forms a complex with U12 snRNA. As to expression, ubiquitous.

The protein resides in the nucleus. Component of minor spliceosome required for U12-type intron splicing and alternative splicing of many introns. Binds specifically to U12 snRNA, which is necessary for branch-point site recognition. Required for normal plant development. The polypeptide is U11/U12 small nuclear ribonucleoprotein 65 kDa protein (SNRNP65) (Arabidopsis thaliana (Mouse-ear cress)).